The chain runs to 364 residues: MAKYTVAVAGATGYAGGEALRILAAHPDFDITCVAGHSSVGESMAKHMPHIPQLANLVVEDTTPEVLNGHDVIILALPHGASGKLASQLDPNAVVVDLGADHRLEEQAAWDEFYGGDFYEHWTYGMPELITGKAADGSYTRQRAALPGTKRIAGPGCNVTATTLALQPGIAEGLVESQDIVADLVVGYSGAGKNLKRTNLLAAEALQSALPYSVGGKHRHIPEILQNFAHAAGKSAAEASEFTLGFTPILAPMSRGILATVSARMTDKAKTLSDEEIRAVWSKAYEGQDFMVLLPEGTLPATGNIIGSNAAHLQVVTDRKAGRIYAFAAIDNLNRGTAGQAVQSLNIALGLPEDAGLTKIGVAP.

Residue Cys-157 is part of the active site.

This sequence belongs to the NAGSA dehydrogenase family. Type 1 subfamily.

It localises to the cytoplasm. The enzyme catalyses N-acetyl-L-glutamate 5-semialdehyde + phosphate + NADP(+) = N-acetyl-L-glutamyl 5-phosphate + NADPH + H(+). The protein operates within amino-acid biosynthesis; L-arginine biosynthesis; N(2)-acetyl-L-ornithine from L-glutamate: step 3/4. Its function is as follows. Catalyzes the NADPH-dependent reduction of N-acetyl-5-glutamyl phosphate to yield N-acetyl-L-glutamate 5-semialdehyde. In Bifidobacterium longum (strain DJO10A), this protein is N-acetyl-gamma-glutamyl-phosphate reductase.